The sequence spans 92 residues: Small ribosomal subunit protein uS19c (92 aa).

The protein belongs to the universal ribosomal protein uS19 family.

The protein resides in the plastid. It is found in the chloroplast. Its function is as follows. Protein S19 forms a complex with S13 that binds strongly to the 16S ribosomal RNA. This is Small ribosomal subunit protein uS19c from Cucumis sativus (Cucumber).